The following is a 175-amino-acid chain: R-phycoerythrin subunit beta (175 aa).

(2R,3E)-phycoerythrobilin is bound at residue C82.

This sequence belongs to the phycobiliprotein family. As to quaternary structure, homodimer. Post-translationally, contains one covalently linked phycoerythrobilin chromophore.

Functionally, green-light absorbing phycoerythrin of unknown function. This Prochlorococcus marinus subsp. pastoris (strain CCMP1986 / NIES-2087 / MED4) protein is R-phycoerythrin subunit beta (cpeB).